Here is a 314-residue protein sequence, read N- to C-terminus: Lysophospholipase D GDPD1 (314 aa).

Topologically, residues 1 to 3 (MSS) are extracellular. Residues 4 to 24 (TAAFYLLSTLGGYLVTSFLLL) traverse the membrane as a helical segment. Topologically, residues 25 to 195 (KYPTLLHQRK…VEKCYKENSD (171 aa)) are cytoplasmic. The 270-residue stretch at 40–309 (SKHISHRGGA…DYPTKLRDFL (270 aa)) folds into the GP-PDE domain. A divalent metal cation is bound by residues E72, D74, and H87. The chain crosses the membrane as a helical span at residues 196-216 (IPILFSLQRVLLILGLFFTGL). Residues 217–314 (LPFVPIREQF…LRDFLHNFSA (98 aa)) are Extracellular-facing.

It belongs to the glycerophosphoryl diester phosphodiesterase family. In terms of tissue distribution, widely expressed with high expression level in testis.

The protein localises to the cytoplasm. It localises to the membrane. The protein resides in the perinuclear region. It is found in the endoplasmic reticulum. The enzyme catalyses a 1-O-alkyl-sn-glycero-3-phosphocholine + H2O = a 1-O-alkyl-sn-glycero-3-phosphate + choline + H(+). It carries out the reaction 1-hexadecanoyl-sn-glycero-3-phosphocholine + H2O = 1-hexadecanoyl-sn-glycero-3-phosphate + choline + H(+). It catalyses the reaction N-hexadecanoyl-sn-glycero-3-phosphoethanolamine + H2O = N-hexadecanoylethanolamine + sn-glycerol 3-phosphate + H(+). The catalysed reaction is N-(5Z,8Z,11Z,14Z-eicosatetraenoyl)-1-(9Z-octadecenoyl)-sn-glycero-3-phosphoethanolamine + H2O = N-(5Z,8Z,11Z,14Z-eicosatetraenoyl)-ethanolamine + 1-(9Z-octadecenoyl)-sn-glycero-3-phosphate + H(+). The enzyme catalyses N,1-di-(9Z-octadecenoyl)-sn-glycero-3-phosphoethanolamine + H2O = N-(9Z-octadecenoyl) ethanolamine + 1-(9Z-octadecenoyl)-sn-glycero-3-phosphate + H(+). It carries out the reaction N-hexadecanoyl-1-(9Z-octadecenoyl)-sn-glycero-3-phosphoethanolamine + H2O = N-hexadecanoylethanolamine + 1-(9Z-octadecenoyl)-sn-glycero-3-phosphate + H(+). It catalyses the reaction 1-O-(1Z-octadecenyl)-sn-glycero-3-phospho-N-hexadecanoyl-ethanolamine + H2O = 1-O-(1Z-octadecenyl)-sn-glycero-3-phosphate + N-hexadecanoylethanolamine + H(+). The catalysed reaction is 1-hexadecanoyl-sn-glycero-3-phosphoethanolamine + H2O = 1-hexadecanoyl-sn-glycero-3-phosphate + ethanolamine + H(+). The enzyme catalyses 1-O-hexadecyl-sn-glycero-3-phosphocholine + H2O = 1-O-hexadecyl-sn-glycero-3-phosphate + choline + H(+). It carries out the reaction 1-(9Z-octadecenoyl)-sn-glycero-3-phosphocholine + H2O = 1-(9Z-octadecenoyl)-sn-glycero-3-phosphate + choline + H(+). It catalyses the reaction N,1-dihexadecanoyl-sn-glycero-3-phosphoethanolamine + H2O = N-hexadecanoylethanolamine + 1-hexadecanoyl-sn-glycero-3-phosphate + H(+). The catalysed reaction is 1-O-(1Z-octadecenyl)-sn-glycero-3-phospho-(N-5Z,8Z,11Z,14Z-eicosatetraenoyl)-ethanolamine + H2O = 1-O-(1Z-octadecenyl)-sn-glycero-3-phosphate + N-(5Z,8Z,11Z,14Z-eicosatetraenoyl)-ethanolamine + H(+). The enzyme catalyses 1-O-(1Z-octadecenyl)-sn-glycero-3-phospho-(N-9Z-octadecenoyl)-ethanolamine + H2O = 1-O-(1Z-octadecenyl)-sn-glycero-3-phosphate + N-(9Z-octadecenoyl) ethanolamine + H(+). Lysophospholipase D activity is increased by magnesium and manganese and inhibited by calcium in a concentration dependent manner. Loss of lysophospholipase D activity by addition of EDTA. Hydrolyzes lysoglycerophospholipids to produce lysophosphatidic acid (LPA) and the corresponding amines. Shows a preference for 1-O-alkyl-sn-glycero-3-phosphocholine (lyso-PAF), lysophosphatidylethanolamine (lyso-PE) and lysophosphatidylcholine (lyso-PC). May be involved in bioactive N-acylethanolamine biosynthesis from both N-acyl-lysoplasmenylethanolamin (N-acyl-lysoPlsEt) and N-acyl-lysophosphatidylethanolamin (N-acyl-lysoPE). In addition, hydrolyzes glycerophospho-N-acylethanolamine to N-acylethanolamine. Does not display glycerophosphodiester phosphodiesterase activity, since it cannot hydrolyze either glycerophosphoinositol or glycerophosphocholine. The polypeptide is Lysophospholipase D GDPD1 (Homo sapiens (Human)).